Reading from the N-terminus, the 125-residue chain is Large ribosomal subunit protein bL12 (125 aa).

It belongs to the bacterial ribosomal protein bL12 family. In terms of assembly, homodimer. Part of the ribosomal stalk of the 50S ribosomal subunit. Forms a multimeric L10(L12)X complex, where L10 forms an elongated spine to which 2 to 4 L12 dimers bind in a sequential fashion. Binds GTP-bound translation factors.

Forms part of the ribosomal stalk which helps the ribosome interact with GTP-bound translation factors. Is thus essential for accurate translation. The protein is Large ribosomal subunit protein bL12 of Rickettsia typhi (strain ATCC VR-144 / Wilmington).